The chain runs to 137 residues: Maltose regulon regulatory protein MalI (137 aa).

In terms of domain architecture, HTH lacI-type spans 6–60 (VTITEVAKHAGVSVTTVSMVLGNKGRISPDTIEKVNASVEALGYIRNRAAANLRS). The H-T-H motif DNA-binding region spans 8–27 (ITEVAKHAGVSVTTVSMVLG).

Repressor for the malX and malY genes. This Vibrio furnissii protein is Maltose regulon regulatory protein MalI (malI).